A 63-amino-acid chain; its full sequence is Large ribosomal subunit protein uL29 (63 aa).

Belongs to the universal ribosomal protein uL29 family.

This Stutzerimonas stutzeri (strain A1501) (Pseudomonas stutzeri) protein is Large ribosomal subunit protein uL29.